Consider the following 326-residue polypeptide: Eukaryotic translation initiation factor 3 subunit I (326 aa).

WD repeat units lie at residues 8–47 (GHER…RLGT), 50–89 (GHQG…VIAS), 145–184 (MVES…KVVD), 188–227 (DHAA…CLKT), and 285–326 (GHFG…NIFE).

Belongs to the eIF-3 subunit I family. In terms of assembly, component of the eukaryotic translation initiation factor 3 (eIF-3) complex. The eIF-3 complex interacts with pix.

The protein localises to the cytoplasm. In terms of biological role, component of the eukaryotic translation initiation factor 3 (eIF-3) complex, which is involved in protein synthesis of a specialized repertoire of mRNAs and, together with other initiation factors, stimulates binding of mRNA and methionyl-tRNAi to the 40S ribosome. The eIF-3 complex specifically targets and initiates translation of a subset of mRNAs involved in cell proliferation. This Drosophila grimshawi (Hawaiian fruit fly) protein is Eukaryotic translation initiation factor 3 subunit I.